A 202-amino-acid polypeptide reads, in one-letter code: Glycerol-3-phosphate acyltransferase (202 aa).

5 consecutive transmembrane segments (helical) span residues 3–23 (ILLA…VVVS), 51–71 (KAAI…VWLV), 74–94 (FGIG…LGHL), 116–136 (AVHP…AFFF), and 140–160 (SLAA…LFGT).

The protein belongs to the PlsY family. In terms of assembly, probably interacts with PlsX.

The protein resides in the cell inner membrane. The catalysed reaction is an acyl phosphate + sn-glycerol 3-phosphate = a 1-acyl-sn-glycero-3-phosphate + phosphate. The protein operates within lipid metabolism; phospholipid metabolism. In terms of biological role, catalyzes the transfer of an acyl group from acyl-phosphate (acyl-PO(4)) to glycerol-3-phosphate (G3P) to form lysophosphatidic acid (LPA). This enzyme utilizes acyl-phosphate as fatty acyl donor, but not acyl-CoA or acyl-ACP. The sequence is that of Glycerol-3-phosphate acyltransferase from Burkholderia thailandensis (strain ATCC 700388 / DSM 13276 / CCUG 48851 / CIP 106301 / E264).